A 4639-amino-acid polypeptide reads, in one-letter code: Dynein heavy chain, cytoplasmic (4639 aa).

Residues 1–1856 (MGDSLENPDT…TIHMANARFF (1856 aa)) form a stem region. 3 coiled-coil regions span residues 530–565 (LDIT…LRDQ), 774–794 (SLIE…DRAS), and 1264–1368 (DDAL…ARLR). AAA stretches follow at residues 1857 to 2084 (YGFE…VLIS), 2166 to 2437 (EEIR…FTRL), 2541 to 2790 (EVET…WVRG), and 2884 to 3153 (VFYE…GGRT). Residues 1895–1902 (GPAGTGKT), 2210–2217 (GPSGSGKS), 2580–2587 (GPPGSGKT), and 2922–2929 (GVSGAGKT) contribute to the ATP site. Coiled coils occupy residues 3189–3261 (GLNK…EKRK), 3382–3478 (AIAQ…WEST), and 3723–3782 (EFRL…EIET). The segment at 3189–3478 (GLNKIAETVE…NIERERWEST (290 aa)) is stalk. AAA regions lie at residues 3539-3768 (LSNP…DINQ) and 3989-4205 (AHNV…TLDT).

The protein belongs to the dynein heavy chain family. In terms of assembly, consists of at least two heavy chains and a number of intermediate and light chains.

Its subcellular location is the cytoplasm. The protein localises to the cytoskeleton. Cytoplasmic dynein acts as a motor for the intracellular retrograde motility of vesicles and organelles along microtubules. Dynein has ATPase activity; the force-producing power stroke is thought to occur on release of ADP. The protein is Dynein heavy chain, cytoplasmic (Dhc64C) of Drosophila melanogaster (Fruit fly).